Consider the following 121-residue polypeptide: C-X-C motif chemokine 11-6 (121 aa).

The N-terminal stretch at 1–20 is a signal peptide; it reads MKTLAAFLLLSCLIAGEVNG. Intrachain disulfides connect Cys29/Cys56 and Cys31/Cys73. The segment at 95-121 is disordered; sequence QSVPHSTTTGTVKSSMTSSTSAPTAFK. The span at 100–115 shows a compositional bias: low complexity; it reads STTTGTVKSSMTSSTS.

It belongs to the intercrine alpha (chemokine CxC) family.

It localises to the secreted. Functionally, ligand for cxcr3.2. Chemotactic for macrophages. This chain is C-X-C motif chemokine 11-6, found in Danio rerio (Zebrafish).